The chain runs to 207 residues: Probable GTP-binding protein EngB (207 aa).

Residues 22–194 (DLPEIAFAGR…WRRIEEVLPA (173 aa)) enclose the EngB-type G domain. Residues 30–37 (GRSNVGKS), 57–61 (GRTQL), 75–78 (DLPG), 142–145 (TKCD), and 173–175 (FSA) contribute to the GTP site. Mg(2+) is bound by residues Ser-37 and Thr-59.

Belongs to the TRAFAC class TrmE-Era-EngA-EngB-Septin-like GTPase superfamily. EngB GTPase family. It depends on Mg(2+) as a cofactor.

Necessary for normal cell division and for the maintenance of normal septation. The protein is Probable GTP-binding protein EngB of Geotalea daltonii (strain DSM 22248 / JCM 15807 / FRC-32) (Geobacter daltonii).